Consider the following 321-residue polypeptide: Cytochrome c biogenesis protein CcsA (321 aa).

Transmembrane regions (helical) follow at residues 9 to 29 (ILTH…LMTL), 44 to 64 (GIIS…IYSG), 71 to 91 (LYES…IPYL), 98 to 118 (LSVI…SCLS), 143 to 163 (MLLS…LLVI), 225 to 245 (IISL…VWAN), 260 to 280 (WAFI…NINF), and 288 to 308 (VASI…LLGI).

It belongs to the CcmF/CycK/Ccl1/NrfE/CcsA family. As to quaternary structure, may interact with Ccs1.

It localises to the plastid. The protein localises to the chloroplast thylakoid membrane. Required during biogenesis of c-type cytochromes (cytochrome c6 and cytochrome f) at the step of heme attachment. This is Cytochrome c biogenesis protein CcsA from Dioscorea elephantipes (Elephant's foot yam).